The following is a 703-amino-acid chain: Elongation factor G (703 aa).

Residues 8-290 form the tr-type G domain; that stretch reads ARYRNIGICA…AVIEYLPAPT (283 aa). GTP contacts are provided by residues 17–24, 88–92, and 142–145; these read AHVDAGKT, DTPGH, and NKMD.

The protein belongs to the TRAFAC class translation factor GTPase superfamily. Classic translation factor GTPase family. EF-G/EF-2 subfamily.

It localises to the cytoplasm. Catalyzes the GTP-dependent ribosomal translocation step during translation elongation. During this step, the ribosome changes from the pre-translocational (PRE) to the post-translocational (POST) state as the newly formed A-site-bound peptidyl-tRNA and P-site-bound deacylated tRNA move to the P and E sites, respectively. Catalyzes the coordinated movement of the two tRNA molecules, the mRNA and conformational changes in the ribosome. This is Elongation factor G from Teredinibacter turnerae (strain ATCC 39867 / T7901).